The sequence spans 511 residues: Coatomer subunit delta (511 aa).

Positions 168-177 (QARRDAERQG) are enriched in basic and acidic residues. The tract at residues 168–196 (QARRDAERQGKKAPGFGGFGSSTVSGGST) is disordered. At S223 the chain carries Phosphoserine. 2 positions are modified to N6-acetyllysine: K233 and K241. S244 carries the post-translational modification Phosphoserine. One can recognise an MHD domain in the interval 271-511 (MESVHMKIEE…TFLVDKYEIL (241 aa)). An N6-acetyllysine mark is found at K309 and K351. Position 493 is a phosphoserine (S493).

It belongs to the adaptor complexes medium subunit family. Delta-COP subfamily. Oligomeric complex that consists of at least the alpha, beta, beta', gamma, delta, epsilon and zeta subunits. In terms of tissue distribution, ubiquitously expressed.

It localises to the cytoplasm. The protein localises to the golgi apparatus membrane. The protein resides in the cytoplasmic vesicle. Its subcellular location is the COPI-coated vesicle membrane. Functionally, the coatomer is a cytosolic protein complex that binds to dilysine motifs and reversibly associates with Golgi non-clathrin-coated vesicles, which further mediate biosynthetic protein transport from the ER, via the Golgi up to the trans Golgi network. Coatomer complex is required for budding from Golgi membranes, and is essential for the retrograde Golgi-to-ER transport of dilysine-tagged proteins. In mammals, the coatomer can only be recruited by membranes associated to ADP-ribosylation factors (ARFs), which are small GTP-binding proteins; the complex also influences the Golgi structural integrity, as well as the processing, activity, and endocytic recycling of LDL receptors. In Bos taurus (Bovine), this protein is Coatomer subunit delta (ARCN1).